Consider the following 35-residue polypeptide: Mu-theraphotoxin-Pm1a (35 aa).

Disulfide bonds link C3/C17, C10/C22, and C16/C29. Position 35 is a phenylalanine amide (F35).

This sequence belongs to the neurotoxin 10 (Hwtx-1) family. 62 (Vatx) subfamily. In terms of tissue distribution, expressed by the venom gland.

The protein localises to the secreted. In terms of biological role, gating-modifier toxin with weak activity on Nav1.7/SCN9A and Nav1.8/SCN10A. Inhibits Nav1.7/SCN9A peak current (IC(50)=334 nM) and shifts the voltage dependence of activation to more depolarised membrane potentials. Shows 21% peak current inhibition (at 10 uM) on Nav1.8/SCN10A sodium channels. The sequence is that of Mu-theraphotoxin-Pm1a from Poecilotheria metallica (Metallic blue ornamental tree spider).